Consider the following 561-residue polypeptide: Lipase maturation factor 1 (561 aa).

The segment at 1–32 (MAAPRESLRRRKAGAGDPEPEAPPGQGRDLKG) is disordered. Over 1 to 42 (MAAPRESLRRRKAGAGDPEPEAPPGQGRDLKGRPARLRAGTF) the chain is Cytoplasmic. The helical transmembrane segment at 43–65 (WLTRIVLLRALAFVYFVAFLVAF) threads the bilayer. Topologically, residues 66-120 (HQNKQLIGDRGLLPCRAYLQSVQRHFGGRVSWDALSYAPTILWLLDWSHMDANLD) are lumenal. The helical transmembrane segment at 121–144 (ALALLGLGISSFILVSGCANMVLM) threads the bilayer. Over 145–200 (AALWVLYMSLVNVGQIWYSFGWESQLLETGFLGIFLCPLWTLSALPRGTPTSWVVM) the chain is Cytoplasmic. A helical membrane pass occupies residues 201–214 (WGFRWLIFRIMLGA). The Lumenal portion of the chain corresponds to 215–285 (GLIKIRGDRC…LGRRMCIVHG (71 aa)). The chain crosses the membrane as a helical span at residues 286 to 314 (ALQVLFQVVLIISGNLSFLNWLTIVPSLA). The Cytoplasmic portion of the chain corresponds to 315 to 360 (CFDDATLGGLFPSGPGRLKDQVLKIQEEETRGARAPRTRGSVARGT). A helical membrane pass occupies residues 361 to 382 (VNLALGILVAWLSIPVVLNLLS). Residues 383-561 (PRQVMNSSFN…SRQWPYPEPE (179 aa)) are Lumenal-facing.

The protein belongs to the lipase maturation factor family. In terms of assembly, interacts with LPL and SEL1L.

Its subcellular location is the endoplasmic reticulum membrane. Functionally, involved in the maturation of specific proteins in the endoplasmic reticulum. Required for maturation and transport of active lipoprotein lipase (LPL) through the secretory pathway. Each LMF1 molecule chaperones 50 or more molecules of LPL. This chain is Lipase maturation factor 1 (LMF1), found in Bos taurus (Bovine).